We begin with the raw amino-acid sequence, 445 residues long: Homoserine O-succinyltransferase (445 aa).

Positions 45–411 (NAVLICHALS…APHGHDSFLF (367 aa)) constitute an AB hydrolase-1 domain. Ser-153 serves as the catalytic Nucleophile. Arg-223 is a binding site for substrate. Catalysis depends on residues Asp-373 and His-406. Asp-407 provides a ligand contact to substrate.

Belongs to the AB hydrolase superfamily. MetX family. Homodimer.

The protein resides in the cytoplasm. It catalyses the reaction L-homoserine + succinyl-CoA = O-succinyl-L-homoserine + CoA. The protein operates within amino-acid biosynthesis; L-methionine biosynthesis via de novo pathway; O-succinyl-L-homoserine from L-homoserine: step 1/1. Its function is as follows. Transfers a succinyl group from succinyl-CoA to L-homoserine, forming succinyl-L-homoserine. The sequence is that of Homoserine O-succinyltransferase from Psychrobacter arcticus (strain DSM 17307 / VKM B-2377 / 273-4).